Consider the following 105-residue polypeptide: Large ribosomal subunit protein uL24 (105 aa).

This sequence belongs to the universal ribosomal protein uL24 family. Part of the 50S ribosomal subunit.

Its function is as follows. One of two assembly initiator proteins, it binds directly to the 5'-end of the 23S rRNA, where it nucleates assembly of the 50S subunit. One of the proteins that surrounds the polypeptide exit tunnel on the outside of the subunit. This is Large ribosomal subunit protein uL24 from Anaplasma marginale (strain St. Maries).